The primary structure comprises 324 residues: tRNA U34 carboxymethyltransferase (324 aa).

Carboxy-S-adenosyl-L-methionine is bound by residues Lys-91, Trp-105, Lys-110, Gly-130, 152-154 (DPS), 181-182 (IE), Met-196, Tyr-200, and Arg-315.

The protein belongs to the class I-like SAM-binding methyltransferase superfamily. CmoB family. Homotetramer.

It catalyses the reaction carboxy-S-adenosyl-L-methionine + 5-hydroxyuridine(34) in tRNA = 5-carboxymethoxyuridine(34) in tRNA + S-adenosyl-L-homocysteine + H(+). Catalyzes carboxymethyl transfer from carboxy-S-adenosyl-L-methionine (Cx-SAM) to 5-hydroxyuridine (ho5U) to form 5-carboxymethoxyuridine (cmo5U) at position 34 in tRNAs. The polypeptide is tRNA U34 carboxymethyltransferase (Aliivibrio salmonicida (strain LFI1238) (Vibrio salmonicida (strain LFI1238))).